A 55-amino-acid polypeptide reads, in one-letter code: Large ribosomal subunit protein bL33 (55 aa).

Belongs to the bacterial ribosomal protein bL33 family.

This chain is Large ribosomal subunit protein bL33, found in Rhodopseudomonas palustris (strain BisB18).